Consider the following 210-residue polypeptide: NAD(P)H-quinone oxidoreductase subunit I (210 aa).

4Fe-4S ferredoxin-type domains lie at 54-83 (GRIHFEFDKCIACEICVRVCPIDLPVVDWA) and 94-123 (YSYSIDFGVCIFCANCVEFCPTNCLSVTED). [4Fe-4S] cluster is bound by residues cysteine 63, cysteine 66, cysteine 69, cysteine 73, cysteine 103, cysteine 106, cysteine 109, and cysteine 113.

Belongs to the complex I 23 kDa subunit family. In terms of assembly, NDH-1 is composed of at least 11 different subunits. [4Fe-4S] cluster serves as cofactor.

It is found in the cellular thylakoid membrane. The enzyme catalyses a plastoquinone + NADH + (n+1) H(+)(in) = a plastoquinol + NAD(+) + n H(+)(out). It carries out the reaction a plastoquinone + NADPH + (n+1) H(+)(in) = a plastoquinol + NADP(+) + n H(+)(out). In terms of biological role, NDH-1 shuttles electrons from an unknown electron donor, via FMN and iron-sulfur (Fe-S) centers, to quinones in the respiratory and/or the photosynthetic chain. The immediate electron acceptor for the enzyme in this species is believed to be plastoquinone. Couples the redox reaction to proton translocation, and thus conserves the redox energy in a proton gradient. This chain is NAD(P)H-quinone oxidoreductase subunit I, found in Synechococcus sp. (strain JA-2-3B'a(2-13)) (Cyanobacteria bacterium Yellowstone B-Prime).